The primary structure comprises 494 residues: Aspartyl/glutamyl-tRNA(Asn/Gln) amidotransferase subunit B (494 aa).

Belongs to the GatB/GatE family. GatB subfamily. Heterotrimer of A, B and C subunits.

It carries out the reaction L-glutamyl-tRNA(Gln) + L-glutamine + ATP + H2O = L-glutaminyl-tRNA(Gln) + L-glutamate + ADP + phosphate + H(+). The enzyme catalyses L-aspartyl-tRNA(Asn) + L-glutamine + ATP + H2O = L-asparaginyl-tRNA(Asn) + L-glutamate + ADP + phosphate + 2 H(+). Its function is as follows. Allows the formation of correctly charged Asn-tRNA(Asn) or Gln-tRNA(Gln) through the transamidation of misacylated Asp-tRNA(Asn) or Glu-tRNA(Gln) in organisms which lack either or both of asparaginyl-tRNA or glutaminyl-tRNA synthetases. The reaction takes place in the presence of glutamine and ATP through an activated phospho-Asp-tRNA(Asn) or phospho-Glu-tRNA(Gln). The polypeptide is Aspartyl/glutamyl-tRNA(Asn/Gln) amidotransferase subunit B (Rhodopseudomonas palustris (strain ATCC BAA-98 / CGA009)).